A 419-amino-acid polypeptide reads, in one-letter code: Putative polyketide beta-ketoacyl synthase 2 (419 aa).

The Ketosynthase family 3 (KS3) domain maps to 10–413; the sequence is TRRTAVTGIG…GSNAALVLRP (404 aa).

The protein belongs to the thiolase-like superfamily. Beta-ketoacyl-ACP synthases family.

It participates in antibiotic biosynthesis; curamycin biosynthesis. The protein is Putative polyketide beta-ketoacyl synthase 2 (curB) of Streptomyces cyaneus (Streptomyces curacoi).